Reading from the N-terminus, the 315-residue chain is GTP cyclohydrolase MptA 1 (315 aa).

Belongs to the GTP cyclohydrolase IV family. In terms of assembly, homodimer. Fe(2+) serves as cofactor.

The catalysed reaction is GTP + H2O = 7,8-dihydroneopterin 2',3'-cyclic phosphate + formate + diphosphate + H(+). It functions in the pathway cofactor biosynthesis; 5,6,7,8-tetrahydromethanopterin biosynthesis. Functionally, converts GTP to 7,8-dihydro-D-neopterin 2',3'-cyclic phosphate, the first intermediate in the biosynthesis of coenzyme methanopterin. This is GTP cyclohydrolase MptA 1 from Methanocella arvoryzae (strain DSM 22066 / NBRC 105507 / MRE50).